The sequence spans 334 residues: Serine/Arginine-related protein 53 (334 aa).

Basic and acidic residues predominate over residues 1–13 (MGRRSSDTEEESR). Disordered stretches follow at residues 1–173 (MGRR…IKAG), 201–222 (LKAK…QATL), and 241–290 (VQQT…SIPT). Basic residues predominate over residues 14–24 (SKRKKKHRRRS). The span at 44–62 (PRSESRSWSRDRQPRSHSY) shows a compositional bias: basic and acidic residues. Residues 78 to 118 (SRRKRSRSRSRGRGKSYRVQRSRSKSRTRRSRSRPRPRSHS) show a composition bias toward basic residues. Basic and acidic residues-rich tracts occupy residues 132-166 (RSRD…KRGD), 201-218 (LKAK…KEED), and 247-262 (SSKD…EVKH). The stretch at 180-234 (AEQAKARLQLVLEAAAKADEALKAKERNEEEAKRRKEEDQATLGEQVKRVKEIEA) forms a coiled coil.

Interacts (via Arg/Ser-rich domain) with LUC7L3, RBM39 and RSF1. Post-translationally, phosphorylated.

It localises to the nucleus speckle. The protein resides in the nucleus. The protein localises to the cytoplasm. Plays a role in pre-mRNA splicing. Involved in both constitutive and alternative pre-mRNA splicing. May have a role in the recognition of the 3' splice site during the second step of splicing. The protein is Serine/Arginine-related protein 53 (Rsrc1) of Rattus norvegicus (Rat).